The chain runs to 36 residues: Adenylate kinase (36 aa).

Position 10–15 (10–15) interacts with ATP; sequence GAGKGT. The tract at residues 30–36 is NMP; that stretch reads ATGDLFR. The AMP site is built by threonine 31 and arginine 36.

The protein belongs to the adenylate kinase family. Monomer.

The protein localises to the cytoplasm. The catalysed reaction is AMP + ATP = 2 ADP. The protein operates within purine metabolism; AMP biosynthesis via salvage pathway; AMP from ADP: step 1/1. Functionally, catalyzes the reversible transfer of the terminal phosphate group between ATP and AMP. Plays an important role in cellular energy homeostasis and in adenine nucleotide metabolism. The protein is Adenylate kinase (adk) of Streptomyces griseus.